Here is a 70-residue protein sequence, read N- to C-terminus: Large ribosomal subunit protein bL33m (70 aa).

It belongs to the bacterial ribosomal protein bL33 family. Component of the mitochondrial large ribosomal subunit (mt-LSU). Mature yeast 74S mitochondrial ribosomes consist of a small (37S) and a large (54S) subunit. The 37S small subunit contains a 15S ribosomal RNA (15S mt-rRNA) and 34 different proteins. The 54S large subunit contains a 21S rRNA (21S mt-rRNA) and 46 different proteins. bL33m stabilizes the tRNA acceptor stem in the E-site.

It localises to the mitochondrion. Component of the mitochondrial ribosome (mitoribosome), a dedicated translation machinery responsible for the synthesis of mitochondrial genome-encoded proteins, including at least some of the essential transmembrane subunits of the mitochondrial respiratory chain. The mitoribosomes are attached to the mitochondrial inner membrane and translation products are cotranslationally integrated into the membrane. This chain is Large ribosomal subunit protein bL33m (MRPL39), found in Saccharomyces cerevisiae (strain ATCC 204508 / S288c) (Baker's yeast).